The chain runs to 90 residues: DNA-binding protein HU-beta (90 aa).

The protein belongs to the bacterial histone-like protein family. Heterodimer of an alpha and a beta chain.

Histone-like DNA-binding protein which is capable of wrapping DNA to stabilize it, and thus to prevent its denaturation under extreme environmental conditions. This is DNA-binding protein HU-beta (hupB) from Pseudomonas aeruginosa (strain ATCC 15692 / DSM 22644 / CIP 104116 / JCM 14847 / LMG 12228 / 1C / PRS 101 / PAO1).